The sequence spans 175 residues: Co-chaperone protein HscB homolog (175 aa).

The region spanning 7 to 79 is the J domain; the sequence is SHFELFHLPA…LKRATYLLHL (73 aa).

It belongs to the HscB family. Interacts with HscA and stimulates its ATPase activity.

Its function is as follows. Co-chaperone involved in the maturation of iron-sulfur cluster-containing proteins. Seems to help targeting proteins to be folded toward HscA. This Burkholderia thailandensis (strain ATCC 700388 / DSM 13276 / CCUG 48851 / CIP 106301 / E264) protein is Co-chaperone protein HscB homolog.